The sequence spans 2108 residues: MGKERTKTVDRTRVTPVAVIGMGCRLPGGIDSPDRLWEALLRGDDLVTEIPADRWDIDEYYDPEPGVPGRTDCKWGAYLDNVGDFDPEFFGIGEKEAIAIDPQHRLLLETSWEAMEHGGLTPNQMASRTGVFVGLVHTDYILVHADNQTFEGPYGNTGTNACFASGRVAYAMGLQGPAITVDTACSSGLTAIHLACRSLHDGESDIALAGGVYVMLEPRRFASGSALGMLSATGRCHAFDVSADGFVSGEGCVMLALKRLPDALADGDRILAVIRGTAANQDGHTVNIATPSRSAQVAAYREALDVAGVDPATVGMVEAHGPGTPVGDPIEYASLAEVYGNDGPCALASVKTNFGHTQSAAGALGLMKAVLALQHGVVPQNLHFTALPDKLAAIETNLFVPQEITPWPGADQETPRRAAVSSYGMTGTNVHAIVEQAPVPAPESGAPGDTPATPGIDGALLFALSASSQDALRQTAARLADWVDAQGPELAPADLAYTLARRRGHRPVRTAVLAATTAELTEALREVATGEPPYPPAVGQDDRGPVWVFSGQGSQWAGMGADLLATEPVFAATIAAIEPLIAAESGFSVTEAMTAPEVVTGIDRVQPTLFAMQVALAATMKSYGVAPGAVIGHSLGESAAAVVAGALCLEDGVRVICRRSALMTRIAGAGAMASVELPAQQVLSELMARGVNDAVVAVVASPQSTVIGGATQTVRDLVAAWEQRDVLAREVAVDVASHSPQVDPILDELAEALAEISPLQPEIPYYSATSFDPREEPYCDAYYWVDNLRHTVRFAAAVQAALEDGYRVFTELTPHPLLTHAVDQTARSLDMSAAALAGMRREQPLPHGLRALAGDLYAAGAAVDFAVLYPTGRLINAPLPTWNHRRLLLDDTTRRIAHANTVAVHPLLGSHVRLPEEPERHVWQGEVGTVTQPWLADHQIHGAAALPGAAYCEMALAAARAVLGEASEVRDIRFEQMLLLDDETPIGVTATVEAPGVVPLTVETSHDGRYTRQLAAVLHVVREADDAPDQPPQKNIAELLASHPHKVDGAEVRQWLDKRGHRLGPAFAGLVDAYIAEGAGDTVLAEVNLPGPLRSQVKAYGVHPVLLDACFQSVAAHPAVQGMADGGLLLPLGVRRLRSYGSARHARYCCTTVTACGVGVEADLDVLDEHGAVVLAVRGLQLGTGASQASERARVLGERLLSIEWHERELPENSHAEPGAWLLISTCDATDLVAAQLTDALKVHDAQCTTMSWPQRADHAAQAARLRDQLGTGGFTGVFVLTAPQTGDPDAESPVRGGELVKHVVRIAREIPEITAQEPRLYVLTHNAQAVLSGDRPNLEQGGMRGLLRVIGAEHPHLKASYVDVDEQTGAESVARQLLAASGEDETAWRNDQWYTARLCPAPLRPEERQTTVVDHAEAGMRLQIRTPGDLQTLEFAAFDRVPPGPGEIEVAVTASSINFADVLVTFGRYQTLDGRQPQLGTDFAGVVSAVGPGVSELKVGDRVGGMSPNGCWATFVTCDARLATRLPEGLTDAQAAAVTTASATAWYGLQDLARIKAGDKVLIHSATGGVGQAAIAIARAAGAQIYATAGNEKRRDLLRDMGIEHVYDSRSVEFAEQIRRDTAGYGVDIVLNSVTGAAQLAGLKLLALGGRFIEIGKRDIYSNTRLELLPFRRNLAFYGLDLGLMSVSHPAAVRELLSTVYRLTVEGVLPMPQSTHYPLAEAATAIRVMGAAEHTGKLILDVPHAGRSSVVLPPEQARVFRSDGSYIITGGLGGLGLFLAEKMANAGAGRIVLSSRSQPSQKALETIELVRAIGSDVVVECGDIAQPDTADRLVTAATATGLPLRGVLHAAAVVEDATLANITDELIERDWAPKAYGAWQLHRATADQPLDWFCSFSSAAALVGSPGQGAYAAANSWLDTFTHWRRAQDLPATSIAWGAWGQIGRAIAFAEQTGDAIAPEEGAYAFETLLRHNRAYSGYAPVIGSPWLTAFAQHSPFAEKFQSLGQNRSGTSKFLAELVDLPREEWPDRLRRLLSKQVGLILRRTIDTDRLLSEYGLDSLSSQELRARVEAETGIRISATEINTTVRGLADLMCDKLAADRDAPAPA.

A signal peptide spans 1–23 (MGKERTKTVDRTRVTPVAVIGMG). C24 is lipidated: N-palmitoyl cysteine. A lipid anchor (S-diacylglycerol cysteine) is attached at C24. The region spanning 24 to 436 (CRLPGGIDSP…GTNVHAIVEQ (413 aa)) is the Ketosynthase family 3 (KS3) domain. Residue C185 is the Acyl-thioester intermediate; for beta-ketoacyl synthase activity of the active site. Active-site for beta-ketoacyl synthase activity residues include H320 and H356. The tract at residues 438–542 (PVPAPESGAP…PYPPAVGQDD (105 aa)) is linker domain (LD). The acyltransferase (AT) stretch occupies residues 543–842 (RGPVWVFSGQ…AAALAGMRRE (300 aa)). The Acyl-ester intermediate; for acyltransferase activity role is filled by S634. Positions 900-1184 (NTVAVHPLLG…LAVRGLQLGT (285 aa)) are dehydratase (DH). An N-terminal hotdog fold region spans residues 905-1025 (HPLLGSHVRL…AVLHVVREAD (121 aa)). The PKS/mFAS DH domain occupies 905–1191 (HPLLGSHVRL…LGTGASQASE (287 aa)). H938 (proton acceptor; for dehydratase activity) is an active-site residue. A C-terminal hotdog fold region spans residues 1044–1191 (PHKVDGAEVR…LGTGASQASE (148 aa)). D1108 serves as the catalytic Proton donor; for dehydratase activity. A pseudo beta-ketoacyl reductase (PsiKR) region spans residues 1220 to 1391 (AWLLISTCDA…SGEDETAWRN (172 aa)). The interval 1419–1743 (AGMRLQIRTP…EHTGKLILDV (325 aa)) is enoylreductase (ER). Residues 1765–2004 (GSYIITGGLG…HSPFAEKFQS (240 aa)) are beta-ketoacyl reductase (KR). NADP(+) is bound by residues 1773–1776 (LGGL), 1796–1799 (SRSQ), 1824–1825 (DI), and 1897–1898 (FS). In terms of domain architecture, Carrier spans 2025-2101 (EEWPDRLRRL…DLMCDKLAAD (77 aa)). S2060 bears the O-(pantetheine 4'-phosphoryl)serine mark.

Homodimer.

Its subcellular location is the cell membrane. The protein operates within lipid metabolism; fatty acid biosynthesis. Its function is as follows. Polyketide synthase likely involved in the biosynthesis of a polymethyl-branched fatty acid (PMB-FA) that might only be produced during host infection. Is required for the full virulence of M.tuberculosis during host infection. The protein is Mycocerosic acid synthase-like polyketide synthase of Mycobacterium tuberculosis (strain ATCC 25618 / H37Rv).